Here is a 444-residue protein sequence, read N- to C-terminus: MFS-type transporter dbaD (444 aa).

Residues 1 to 13 (MTEQPPQNHSVDL) are compositionally biased toward polar residues. The interval 1–57 (MTEQPPQNHSVDLNQNEDNNENDYRSSSATDAERPCEPKIEESTAKPPTGPPAPPPP) is disordered. N-linked (GlcNAc...) asparagine glycosylation is present at Asn-8. A compositionally biased stretch (basic and acidic residues) spans 31-44 (DAERPCEPKIEEST). Residues 48–57 (PTGPPAPPPP) show a composition bias toward pro residues. The next 11 membrane-spanning stretches (helical) occupy residues 62 to 82 (LVAW…WGIM), 107 to 127 (WIGS…GSIY), 134 to 154 (ALLV…SLCK), 159 to 179 (VLLA…VPCV), 192 to 212 (TALG…PIVL), 223 to 243 (WSVR…IAVM), 267 to 287 (MAFT…LFYI), 301 to 323 (MAFY…PNAM), 330 to 350 (FNLI…LLAV), 356 to 376 (LIVI…LPPL), and 394 to 414 (MGFG…GAIL). The N-linked (GlcNAc...) asparagine glycan is linked to Asn-421. The chain crosses the membrane as a helical span at residues 424–444 (GLWVYGGVTSLVAGFIICIAV).

The protein belongs to the major facilitator superfamily. Monocarboxylate porter (TC 2.A.1.13) family.

Its subcellular location is the cell membrane. Functionally, MFS-type transporter; part of the gene cluster that mediates the biosynthesis of the antibiotic 2,4- dihydroxy-3-methyl-6-(2-oxopropyl)benzaldehyde (DHMBA) and its derivatives. Is probably involved in the transport of the metabolites to the environment. In Emericella nidulans (strain FGSC A4 / ATCC 38163 / CBS 112.46 / NRRL 194 / M139) (Aspergillus nidulans), this protein is MFS-type transporter dbaD.